The chain runs to 192 residues: Thymidine kinase (192 aa).

Residues 9-16 (SAMNAGKS) and 87-90 (DECQ) contribute to the ATP site. E88 acts as the Proton acceptor in catalysis. Residues C145, C147, C182, and H185 each contribute to the Zn(2+) site.

Belongs to the thymidine kinase family. As to quaternary structure, homotetramer.

Its subcellular location is the cytoplasm. The enzyme catalyses thymidine + ATP = dTMP + ADP + H(+). In Vibrio vulnificus (strain YJ016), this protein is Thymidine kinase.